Reading from the N-terminus, the 116-residue chain is Non-specific lipid-transfer protein 10 (116 aa).

The first 22 residues, 1-22 (MMRVVLPLCLLLASIFAWGSEA), serve as a signal peptide directing secretion. Cystine bridges form between Cys-26/Cys-73, Cys-36/Cys-50, Cys-51/Cys-98, and Cys-71/Cys-112.

It belongs to the plant LTP family.

Its function is as follows. Plant non-specific lipid-transfer proteins transfer phospholipids as well as galactolipids across membranes. May play a role in wax or cutin deposition in the cell walls of expanding epidermal cells and certain secretory tissues. The chain is Non-specific lipid-transfer protein 10 (LTP10) from Arabidopsis thaliana (Mouse-ear cress).